The sequence spans 555 residues: Lysine--tRNA ligase (555 aa).

The short motif at 37–45 (TSGRLHVGN) is the 'HIGH' region element. A 'KMSKS' region motif is present at residues 301-305 (AMSSS).

It belongs to the class-I aminoacyl-tRNA synthetase family.

It localises to the cytoplasm. It catalyses the reaction tRNA(Lys) + L-lysine + ATP = L-lysyl-tRNA(Lys) + AMP + diphosphate. In Methanopyrus kandleri (strain AV19 / DSM 6324 / JCM 9639 / NBRC 100938), this protein is Lysine--tRNA ligase.